A 67-amino-acid chain; its full sequence is Alpha-conotoxin-like Qc1.1a (67 aa).

The signal sequence occupies residues 1–21 (MGMRMMFTMFLLVVLAITVVS). Residues 22–46 (FTSDHASDGRNTAANDKASNLMALR) constitute a propeptide that is removed on maturation. Cystine bridges form between Cys49-Cys55 and Cys50-Cys63. A lacks the Ser-Xaa-Pro motif that is crucial for potent interaction with nAChR region spans residues 51–53 (PDP).

This sequence belongs to the conotoxin A superfamily. As to expression, expressed by the venom duct.

The protein localises to the secreted. Alpha-conotoxins act on postsynaptic membranes, they bind to the nicotinic acetylcholine receptors (nAChR) and thus inhibit them. Has possibly a distinct nAChR binding mode from other alpha-conotoxins, due to a different three residue motif (lacks the Ser-Xaa-Pro motif). This Conus quercinus (Oak cone) protein is Alpha-conotoxin-like Qc1.1a.